Here is a 175-residue protein sequence, read N- to C-terminus: Small ribosomal subunit protein uS5 (175 aa).

The tract at residues 1–21 (MAKPERNKKPQQAEERDDGMR) is disordered. The region spanning 20 to 83 (MREKMVAVNR…EEARRKMAKV (64 aa)) is the S5 DRBM domain.

This sequence belongs to the universal ribosomal protein uS5 family. As to quaternary structure, part of the 30S ribosomal subunit. Contacts proteins S4 and S8.

Functionally, with S4 and S12 plays an important role in translational accuracy. Located at the back of the 30S subunit body where it stabilizes the conformation of the head with respect to the body. In Dechloromonas aromatica (strain RCB), this protein is Small ribosomal subunit protein uS5.